Here is a 376-residue protein sequence, read N- to C-terminus: Glutamate 5-kinase (376 aa).

ATP is bound at residue Lys17. Substrate-binding residues include Ser56, Asp144, and Asn156. Residues 176–177 and 218–224 each bind ATP; these read TD and TGGMQSK. The PUA domain maps to 283 to 359; the sequence is KGTLLLDAGA…QSREIASVLK (77 aa).

This sequence belongs to the glutamate 5-kinase family.

It is found in the cytoplasm. The enzyme catalyses L-glutamate + ATP = L-glutamyl 5-phosphate + ADP. The protein operates within amino-acid biosynthesis; L-proline biosynthesis; L-glutamate 5-semialdehyde from L-glutamate: step 1/2. Functionally, catalyzes the transfer of a phosphate group to glutamate to form L-glutamate 5-phosphate. This chain is Glutamate 5-kinase, found in Desulfotalea psychrophila (strain LSv54 / DSM 12343).